The following is a 387-amino-acid chain: Delta(12)-acyl-lipid-desaturase (387 aa).

The tract at residues 1 to 31 (MGAGGRMTVPNKWEGEGDEKSQKPVQRVPSA) is disordered. Residues 13–22 (WEGEGDEKSQ) are compositionally biased toward basic and acidic residues. The next 2 membrane-spanning stretches (helical) occupy residues 58–78 (SYVL…TTYI) and 88–108 (AAWP…WVIA). The short motif at 109-113 (HECGH) is the Histidine box-1 element. A helical membrane pass occupies residues 121–141 (WVDDCVGLVLHSALLVPYFSW). A Histidine box-2 motif is present at residues 145–149 (HRRHH). A run of 3 helical transmembrane segments spans residues 183-203 (VMTL…LNVS), 229-249 (IYIS…IAAA), and 251-271 (GLAW…AFLV). A Histidine box-3 motif is present at residues 319–323 (HVAHH).

The protein belongs to the fatty acid desaturase type 1 family.

It is found in the membrane. The protein operates within lipid metabolism; polyunsaturated fatty acid biosynthesis. In terms of biological role, delta(12)-fatty acid desaturase producing in a heterologous system linoleic acid (18:2(9Z,12Z)) and to a lower extent hexadecadienoic acid (16:2(9Z,12Z)). In Punica granatum (Pomegranate), this protein is Delta(12)-acyl-lipid-desaturase.